The sequence spans 157 residues: 2-C-methyl-D-erythritol 2,4-cyclodiphosphate synthase (157 aa).

2 residues coordinate a divalent metal cation: Asp-8 and His-10. Residues 8-10 (DIH) and 35-36 (HS) contribute to the 4-CDP-2-C-methyl-D-erythritol 2-phosphate site. Residue His-43 coordinates a divalent metal cation. 4-CDP-2-C-methyl-D-erythritol 2-phosphate-binding positions include 57 to 59 (DIG), 62 to 66 (FPNND), and Lys-142.

The protein belongs to the IspF family. In terms of assembly, homotrimer. A divalent metal cation serves as cofactor.

The enzyme catalyses 4-CDP-2-C-methyl-D-erythritol 2-phosphate = 2-C-methyl-D-erythritol 2,4-cyclic diphosphate + CMP. It functions in the pathway isoprenoid biosynthesis; isopentenyl diphosphate biosynthesis via DXP pathway; isopentenyl diphosphate from 1-deoxy-D-xylulose 5-phosphate: step 4/6. In terms of biological role, involved in the biosynthesis of isopentenyl diphosphate (IPP) and dimethylallyl diphosphate (DMAPP), two major building blocks of isoprenoid compounds. Catalyzes the conversion of 4-diphosphocytidyl-2-C-methyl-D-erythritol 2-phosphate (CDP-ME2P) to 2-C-methyl-D-erythritol 2,4-cyclodiphosphate (ME-CPP) with a corresponding release of cytidine 5-monophosphate (CMP). This chain is 2-C-methyl-D-erythritol 2,4-cyclodiphosphate synthase, found in Wigglesworthia glossinidia brevipalpis.